The primary structure comprises 167 residues: Putative pre-16S rRNA nuclease (167 aa).

Residues 1-24 (MVLTQHRVPDRPGDPDQDPGRGRR) are disordered. Over residues 7–21 (RVPDRPGDPDQDPGR) the composition is skewed to basic and acidic residues.

This sequence belongs to the YqgF nuclease family.

It is found in the cytoplasm. Its function is as follows. Could be a nuclease involved in processing of the 5'-end of pre-16S rRNA. The protein is Putative pre-16S rRNA nuclease of Mycolicibacterium paratuberculosis (strain ATCC BAA-968 / K-10) (Mycobacterium paratuberculosis).